We begin with the raw amino-acid sequence, 610 residues long: Aspartate--tRNA(Asp/Asn) ligase (610 aa).

L-aspartate is bound at residue Glu-196. Residues 220–223 (QIFK) are aspartate. Arg-242 is an L-aspartate binding site. Residues 242 to 244 (RDE) and Gln-251 contribute to the ATP site. L-aspartate is bound at residue His-465. Glu-499 contacts ATP. Arg-506 provides a ligand contact to L-aspartate. ATP is bound at residue 551 to 554 (GMDR).

The protein belongs to the class-II aminoacyl-tRNA synthetase family. Type 1 subfamily. As to quaternary structure, homodimer.

It localises to the cytoplasm. The catalysed reaction is tRNA(Asx) + L-aspartate + ATP = L-aspartyl-tRNA(Asx) + AMP + diphosphate. Functionally, aspartyl-tRNA synthetase with relaxed tRNA specificity since it is able to aspartylate not only its cognate tRNA(Asp) but also tRNA(Asn). Reaction proceeds in two steps: L-aspartate is first activated by ATP to form Asp-AMP and then transferred to the acceptor end of tRNA(Asp/Asn). This Nitratidesulfovibrio vulgaris (strain ATCC 29579 / DSM 644 / CCUG 34227 / NCIMB 8303 / VKM B-1760 / Hildenborough) (Desulfovibrio vulgaris) protein is Aspartate--tRNA(Asp/Asn) ligase.